Reading from the N-terminus, the 125-residue chain is S-adenosylmethionine decarboxylase proenzyme (125 aa).

The active-site Schiff-base intermediate with substrate; via pyruvic acid is the Ser63. Ser63 carries the post-translational modification Pyruvic acid (Ser); by autocatalysis. The Proton acceptor; for processing activity role is filled by His68. Cys83 serves as the catalytic Proton donor; for catalytic activity.

It belongs to the prokaryotic AdoMetDC family. Type 1 subfamily. Heterotetramer of two alpha and two beta chains arranged as a dimer of alpha/beta heterodimers. It depends on pyruvate as a cofactor. Is synthesized initially as an inactive proenzyme. Formation of the active enzyme involves a self-maturation process in which the active site pyruvoyl group is generated from an internal serine residue via an autocatalytic post-translational modification. Two non-identical subunits are generated from the proenzyme in this reaction, and the pyruvate is formed at the N-terminus of the alpha chain, which is derived from the carboxyl end of the proenzyme. The post-translation cleavage follows an unusual pathway, termed non-hydrolytic serinolysis, in which the side chain hydroxyl group of the serine supplies its oxygen atom to form the C-terminus of the beta chain, while the remainder of the serine residue undergoes an oxidative deamination to produce ammonia and the pyruvoyl group blocking the N-terminus of the alpha chain.

It catalyses the reaction S-adenosyl-L-methionine + H(+) = S-adenosyl 3-(methylsulfanyl)propylamine + CO2. The protein operates within amine and polyamine biosynthesis; S-adenosylmethioninamine biosynthesis; S-adenosylmethioninamine from S-adenosyl-L-methionine: step 1/1. Functionally, catalyzes the decarboxylation of S-adenosylmethionine to S-adenosylmethioninamine (dcAdoMet), the propylamine donor required for the synthesis of the polyamines spermine and spermidine from the diamine putrescine. The chain is S-adenosylmethionine decarboxylase proenzyme from Moorella thermoacetica (strain ATCC 39073 / JCM 9320).